The following is an 879-amino-acid chain: Prostaglandin F2 receptor negative regulator (879 aa).

An N-terminal signal peptide occupies residues methionine 1–arginine 25. 2 consecutive Ig-like C2-type domains span residues valine 26–glutamine 129 and proline 149–glutamate 268. Topologically, residues valine 26–proline 832 are extracellular. Disulfide bonds link cysteine 43–cysteine 119 and cysteine 169–cysteine 247. Asparagine 44 carries an N-linked (GlcNAc...) asparagine glycan. Threonine 271 bears the Phosphothreonine mark. Ig-like C2-type domains follow at residues proline 276–serine 394, proline 406–serine 536, alanine 544–proline 662, and proline 688–histidine 813. N-linked (GlcNAc...) asparagine glycosylation is found at asparagine 286, asparagine 300, asparagine 383, and asparagine 413. Cysteine 299 and cysteine 373 are oxidised to a cystine. Residues proline 424–leucine 427 carry the Endoplasmic reticulum retention signal motif. Cysteine 429 and cysteine 515 are joined by a disulfide. 4 N-linked (GlcNAc...) asparagine glycosylation sites follow: asparagine 525, asparagine 600, asparagine 618, and asparagine 691. Cysteine 571 and cysteine 655 are disulfide-bonded. The Cell attachment site motif lies at arginine 703–aspartate 705. A disulfide bond links cysteine 711 and cysteine 793. Residues leucine 833–cysteine 853 form a helical membrane-spanning segment. Residues serine 854 to aspartate 879 are Cytoplasmic-facing.

In terms of assembly, interacts with CD9 and CD81. Part of a complex composed of CD9, CD81 and IGSF8. Also seems to interact with CD63, CD82 and CD151.

It is found in the endoplasmic reticulum membrane. The protein localises to the golgi apparatus. Its subcellular location is the trans-Golgi network membrane. Its function is as follows. Inhibits the binding of prostaglandin F2-alpha (PGF2-alpha) to its specific FP receptor, by decreasing the receptor number rather than the affinity constant. Functional coupling with the prostaglandin F2-alpha receptor seems to occur. In myoblasts, associates with tetraspanins CD9 and CD81 to prevent myotube fusion during muscle regeneration. This is Prostaglandin F2 receptor negative regulator (PTGFRN) from Homo sapiens (Human).